Here is a 146-residue protein sequence, read N- to C-terminus: Deoxyuridine 5'-triphosphate nucleotidohydrolase (146 aa).

Substrate contacts are provided by residues 65–67, Asn78, 82–84, and Met92; these read RSG and LID.

It belongs to the dUTPase family. It depends on Mg(2+) as a cofactor.

The enzyme catalyses dUTP + H2O = dUMP + diphosphate + H(+). It participates in pyrimidine metabolism; dUMP biosynthesis; dUMP from dCTP (dUTP route): step 2/2. Functionally, this enzyme is involved in nucleotide metabolism: it produces dUMP, the immediate precursor of thymidine nucleotides and it decreases the intracellular concentration of dUTP so that uracil cannot be incorporated into DNA. The sequence is that of Deoxyuridine 5'-triphosphate nucleotidohydrolase from Thiobacillus denitrificans (strain ATCC 25259 / T1).